Reading from the N-terminus, the 302-residue chain is Methionyl-tRNA formyltransferase (302 aa).

Residue 106 to 109 participates in (6S)-5,6,7,8-tetrahydrofolate binding; that stretch reads SVLP.

The protein belongs to the Fmt family.

It carries out the reaction L-methionyl-tRNA(fMet) + (6R)-10-formyltetrahydrofolate = N-formyl-L-methionyl-tRNA(fMet) + (6S)-5,6,7,8-tetrahydrofolate + H(+). Its function is as follows. Attaches a formyl group to the free amino group of methionyl-tRNA(fMet). The formyl group appears to play a dual role in the initiator identity of N-formylmethionyl-tRNA by promoting its recognition by IF2 and preventing the misappropriation of this tRNA by the elongation apparatus. The protein is Methionyl-tRNA formyltransferase of Hydrogenobaculum sp. (strain Y04AAS1).